Reading from the N-terminus, the 525-residue chain is Glutathione hydrolase-like YwrD proenzyme (525 aa).

The active-site Nucleophile is the Thr339.

It belongs to the gamma-glutamyltransferase family. In terms of assembly, this enzyme consists of two polypeptide chains, which are synthesized from a single polypeptide. Cleaved by autocatalysis into a large and a small subunit.

It catalyses the reaction an N-terminal (5-L-glutamyl)-[peptide] + an alpha-amino acid = 5-L-glutamyl amino acid + an N-terminal L-alpha-aminoacyl-[peptide]. It carries out the reaction glutathione + H2O = L-cysteinylglycine + L-glutamate. The enzyme catalyses an S-substituted glutathione + H2O = an S-substituted L-cysteinylglycine + L-glutamate. Functionally, overexpressed protein with an N-terminal His tag has been reported not to hydrolyze glutathione; it is not clear if the construct is processed to 2 subunits. The polypeptide is Glutathione hydrolase-like YwrD proenzyme (ywrD) (Bacillus subtilis (strain 168)).